The sequence spans 511 residues: ATP synthase subunit alpha (511 aa).

An ATP-binding site is contributed by 169–176; it reads GDRQTGKT.

It belongs to the ATPase alpha/beta chains family. F-type ATPases have 2 components, CF(1) - the catalytic core - and CF(0) - the membrane proton channel. CF(1) has five subunits: alpha(3), beta(3), gamma(1), delta(1), epsilon(1). CF(0) has three main subunits: a(1), b(2) and c(9-12). The alpha and beta chains form an alternating ring which encloses part of the gamma chain. CF(1) is attached to CF(0) by a central stalk formed by the gamma and epsilon chains, while a peripheral stalk is formed by the delta and b chains.

It localises to the cell inner membrane. It carries out the reaction ATP + H2O + 4 H(+)(in) = ADP + phosphate + 5 H(+)(out). Functionally, produces ATP from ADP in the presence of a proton gradient across the membrane. The alpha chain is a regulatory subunit. In Paracoccus denitrificans (strain Pd 1222), this protein is ATP synthase subunit alpha.